Reading from the N-terminus, the 548-residue chain is Natural resistance-associated macrophage protein 1 (548 aa).

The segment covering 1-12 (MSGDTGTPNQGG) has biased composition (polar residues). Residues 1–38 (MSGDTGTPNQGGTRYGSISSPPSPGPQQAPPGGTYLSE) are disordered. Residues 1-55 (MSGDTGTPNQGGTRYGSISSPPSPGPQQAPPGGTYLSEKIPIPDTESGAFSLRKL) are Cytoplasmic-facing. Residues 56-73 (WAFTGPGFLMSIAFLDPG) traverse the membrane as a helical segment. The Extracellular segment spans residues 74–82 (NIESDLQAG). A helical transmembrane segment spans residues 83–102 (AVAGFKLLWVLLWATVLGLL). The Cytoplasmic portion of the chain corresponds to 103 to 139 (CQRLAARLGVVTGKDLGEVCHLYYPKVPRTLLWLTIE). Residues 140–160 (LAIVGSDMQEVIGTAIAFSLL) form a helical membrane-spanning segment. Over 161–164 (SAGR) the chain is Extracellular. The helical transmembrane segment at 165–184 (IPLWGGVLITIVDTFFFLFL) threads the bilayer. The Cytoplasmic segment spans residues 185–193 (DNYGLRKLE). The chain crosses the membrane as a helical span at residues 194 to 214 (AFFGFLITIMALTFGYEYVVA). The Extracellular segment spans residues 215-237 (RPAQGALLQGLFLPSCPGCGQPE). The helical transmembrane segment at 238-256 (LLQAVGIVGAIIMPHNIYL) threads the bilayer. Residues 257–284 (HSSLVKSREVDRSRRADIREANMYFLIE) lie on the Cytoplasmic side of the membrane. The helical transmembrane segment at 285-304 (ATIALSVSFFINLFVMAVFG) threads the bilayer. The Extracellular segment spans residues 305–346 (QAFYKQTNQAAFNICANSSLHDYATIFPRDNLTVAVDIYQGG). 2 N-linked (GlcNAc...) asparagine glycosylation sites follow: Asn321 and Asn335. Residues 347-366 (VILGCLFGPAALYIWAVGLL) form a helical membrane-spanning segment. At 367 to 397 (AAGQSSTMTGTYAGQFVMEGFLKLRWSRFAR) the chain is on the cytoplasmic side. Residues 398 to 415 (VLLTRSCAIPPTVLLAVF) traverse the membrane as a helical segment. The Extracellular segment spans residues 416–426 (RDLQDLSGLND). Residues 427–447 (LLNVLQSLLLPFAVLPILTFT) traverse the membrane as a helical segment. The Cytoplasmic portion of the chain corresponds to 448 to 463 (SMPALMQEFANGLVSK). The chain crosses the membrane as a helical span at residues 464–485 (IITSSIMVLVCAVNLYFVISYV). Topologically, residues 486 to 493 (PSLPHPAY) are extracellular. The helical transmembrane segment at 494 to 513 (FSLVALLAAAYLGLTTYLVW) threads the bilayer. Topologically, residues 514-548 (TCLITQGATRLAHSSHQRFLYGLPGEDQEEGRTSG) are cytoplasmic.

It belongs to the NRAMP family.

It is found in the late endosome membrane. The protein resides in the lysosome membrane. The catalysed reaction is Zn(2+)(in) + H(+)(out) = Zn(2+)(out) + H(+)(in). The enzyme catalyses Fe(2+)(in) + H(+)(out) = Fe(2+)(out) + H(+)(in). It carries out the reaction Mn(2+)(in) + H(+)(out) = Mn(2+)(out) + H(+)(in). Functionally, macrophage-specific antiporter that fluxes metal ions in either direction against a proton gradient. Localized to late endosomal lysosomal membranes, delivers bivalent cations from the cytosol into these acidic compartments where they may directly affect antimicrobial activity. Involved in iron metabolism and host natural resistance to infection with intracellular parasites. Pathogen resistance involves sequestration of Fe(2+) and Mn(2+), cofactors of both prokaryotic and eukaryotic catalases and superoxide dismutases, not only to protect the macrophage against its own generation of reactive oxygen species, but to deny the cations to the pathogen for synthesis of its protective enzymes. The protein is Natural resistance-associated macrophage protein 1 (SLC11A1) of Ovis aries (Sheep).